The chain runs to 282 residues: Lipoyl synthase (282 aa).

[4Fe-4S] cluster contacts are provided by C37, C42, C48, C63, C67, C70, and S275. The Radical SAM core domain occupies 49 to 264; sequence WSRGTATFMI…RLVGIEKGFR (216 aa).

It belongs to the radical SAM superfamily. Lipoyl synthase family. Requires [4Fe-4S] cluster as cofactor.

It localises to the cytoplasm. It carries out the reaction [[Fe-S] cluster scaffold protein carrying a second [4Fe-4S](2+) cluster] + N(6)-octanoyl-L-lysyl-[protein] + 2 oxidized [2Fe-2S]-[ferredoxin] + 2 S-adenosyl-L-methionine + 4 H(+) = [[Fe-S] cluster scaffold protein] + N(6)-[(R)-dihydrolipoyl]-L-lysyl-[protein] + 4 Fe(3+) + 2 hydrogen sulfide + 2 5'-deoxyadenosine + 2 L-methionine + 2 reduced [2Fe-2S]-[ferredoxin]. The protein operates within protein modification; protein lipoylation via endogenous pathway; protein N(6)-(lipoyl)lysine from octanoyl-[acyl-carrier-protein]: step 2/2. Functionally, catalyzes the radical-mediated insertion of two sulfur atoms into the C-6 and C-8 positions of the octanoyl moiety bound to the lipoyl domains of lipoate-dependent enzymes, thereby converting the octanoylated domains into lipoylated derivatives. The chain is Lipoyl synthase from Porphyromonas gingivalis (strain ATCC BAA-308 / W83).